A 364-amino-acid chain; its full sequence is MQPKQRILNAPVYQPGKPIDDVKREFGLTEVIKLASNENPFGSSPKAKAAISEQLDNLALYPDGASLNLRWDLADFLGVKPSQLFFGNGSDEILLMISRAFLSEGTNAVMATQTFSQYRSNGIIEGADLIEVPLKDGVHDLEAMAAAINEQTKVVWVCNPNNPSGTIVTTSELEAFMKKTPKDVLVVLDEAYYEYVVDPEYPQTVPMLAEYPNLIILRTFSKIYGLAALRIGYGIASEELISSLEHVREPFNTGTLGQVAARAALKDQEFVKSCRDRNREGMKQFTDSFDEWGLSYYPSQTNFILVDLKMDSDEVFKKLLSQGIIVRSGNALGFPGFQRITIGTKEQNDKILSVLKEIVTGALK.

K222 bears the N6-(pyridoxal phosphate)lysine mark.

Belongs to the class-II pyridoxal-phosphate-dependent aminotransferase family. Histidinol-phosphate aminotransferase subfamily. In terms of assembly, homodimer. Pyridoxal 5'-phosphate serves as cofactor.

It carries out the reaction L-histidinol phosphate + 2-oxoglutarate = 3-(imidazol-4-yl)-2-oxopropyl phosphate + L-glutamate. It functions in the pathway amino-acid biosynthesis; L-histidine biosynthesis; L-histidine from 5-phospho-alpha-D-ribose 1-diphosphate: step 7/9. The protein is Histidinol-phosphate aminotransferase of Brevibacillus brevis (strain 47 / JCM 6285 / NBRC 100599).